Reading from the N-terminus, the 156-residue chain is H/ACA ribonucleoprotein complex subunit 2-like protein (156 aa).

Belongs to the eukaryotic ribosomal protein eL8 family. As to quaternary structure, component of the small nucleolar ribonucleoprotein particle containing H/ACA-type snoRNAs (H/ACA snoRNPs).

It is found in the nucleus. Its subcellular location is the nucleolus. Its function is as follows. Required for ribosome biogenesis. Part of a complex which catalyzes pseudouridylation of rRNA. This involves the isomerization of uridine such that the ribose is subsequently attached to C5, instead of the normal N1. Pseudouridine ('psi') residues may serve to stabilize the conformation of rRNAs. The polypeptide is H/ACA ribonucleoprotein complex subunit 2-like protein (Arabidopsis thaliana (Mouse-ear cress)).